The primary structure comprises 1790 residues: Cytokinesis protein sepA (1790 aa).

Disordered stretches follow at residues 1-275 (MPTS…YLTR) and 328-350 (GEQKRKQKARETHGYDGPSGILE). The span at 24 to 35 (ERPVEDRWDAHG) shows a compositional bias: basic and acidic residues. 2 stretches are compositionally biased toward low complexity: residues 39-62 (SLAPPSSAAGSRSSRYSKRSSIQS) and 187-203 (SHHSSSTVDSSTNSRMS). The segment covering 205-236 (DQASIHSSLSSNTRGSSYISTDGSSRTTLPSH) has biased composition (polar residues). The 429-residue stretch at 274–702 (TRPRDDRVVD…YVAMDRRLPD (429 aa)) folds into the GBD/FH3 domain. Basic and acidic residues predominate over residues 328–341 (GEQKRKQKARETHG). Positions 724 to 811 (AEARRAYDES…QRNELETREL (88 aa)) form a coiled coil. In terms of domain architecture, FH1 spans 955–1136 (DPEQATGLLG…NYLASQGAPS (182 aa)). Basic and acidic residues predominate over residues 975 to 986 (ADDAKDEGKPTE). Disordered stretches follow at residues 975–1119 (ADDA…PPGT), 1465–1484 (NLSDPKKFHPQDRVSQITQR), and 1596–1790 (RAAA…PSTS). Composition is skewed to pro residues over residues 1015–1026 (APPPPPPPPPAH) and 1033–1118 (APPP…PPPG). An FH2 domain is found at 1141–1564 (VMSSIRPKKK…TEASLARKRI (424 aa)). Residues 1435 to 1566 (LQKLNVDQLR…ASLARKRINV (132 aa)) adopt a coiled-coil conformation. The region spanning 1581–1613 (SPATSGAMDSLLEKLRAAAPQAKDQRDRRRRAR) is the DAD domain. Over residues 1608 to 1620 (RRRRARLKERHQV) the composition is skewed to basic residues. Polar residues predominate over residues 1644–1661 (SGATDTNATDSSLLSPTI). Residues 1694 to 1710 (PDPERTRRRRESAEEER) are compositionally biased toward basic and acidic residues. Positions 1720–1746 (GATSGSKDSNDTTPLSPVTEPTSTQGE) are enriched in polar residues.

The protein belongs to the formin homology family. BNI1 subfamily.

Functionally, involved in cytokinesis. Overexpression results in growth inhibition. This Emericella nidulans (strain FGSC A4 / ATCC 38163 / CBS 112.46 / NRRL 194 / M139) (Aspergillus nidulans) protein is Cytokinesis protein sepA (sepA).